Here is a 934-residue protein sequence, read N- to C-terminus: Bifunctional uridylyltransferase/uridylyl-removing enzyme (934 aa).

Residues 1–379 form a uridylyltransferase region; the sequence is MSAHDLKLEE…TFSRRKRKLS (379 aa). A uridylyl-removing region spans residues 380–736; the sequence is DDGAFISENH…AKPHAFEAVT (357 aa). The HD domain maps to 496-613; it reads VDEHLLRCIA…IDFADTVQTM (118 aa). ACT domains lie at 737–818 and 848–931; these read EITV…DMLA and VIEV…RSPQ.

Belongs to the GlnD family. Mg(2+) is required as a cofactor.

The enzyme catalyses [protein-PII]-L-tyrosine + UTP = [protein-PII]-uridylyl-L-tyrosine + diphosphate. It carries out the reaction [protein-PII]-uridylyl-L-tyrosine + H2O = [protein-PII]-L-tyrosine + UMP + H(+). Its activity is regulated as follows. Uridylyltransferase (UTase) activity is inhibited by glutamine, while glutamine activates uridylyl-removing (UR) activity. Modifies, by uridylylation and deuridylylation, the PII regulatory proteins (GlnB and homologs), in response to the nitrogen status of the cell that GlnD senses through the glutamine level. Under low glutamine levels, catalyzes the conversion of the PII proteins and UTP to PII-UMP and PPi, while under higher glutamine levels, GlnD hydrolyzes PII-UMP to PII and UMP (deuridylylation). Thus, controls uridylylation state and activity of the PII proteins, and plays an important role in the regulation of nitrogen assimilation and metabolism. In Brucella ovis (strain ATCC 25840 / 63/290 / NCTC 10512), this protein is Bifunctional uridylyltransferase/uridylyl-removing enzyme.